The following is a 337-amino-acid chain: Serpentine receptor class delta-18 (337 aa).

The next 6 helical transmembrane spans lie at 2–22 (IIFF…LNLL), 90–110 (VGLS…LLSF), 130–150 (LILV…TIFA), 187–207 (IYSI…IFIL), 236–256 (ALTI…FYFL), and 270–290 (SIYA…LYFV).

Belongs to the nematode receptor-like protein srd family.

It localises to the membrane. The protein is Serpentine receptor class delta-18 (srd-18) of Caenorhabditis elegans.